The primary structure comprises 175 residues: Ribosome maturation factor RimM (175 aa).

The 75-residue stretch at 93–167 (DDEFYYSDLI…YIIITLPEVI (75 aa)) folds into the PRC barrel domain.

It belongs to the RimM family. As to quaternary structure, binds ribosomal protein uS19.

The protein resides in the cytoplasm. Its function is as follows. An accessory protein needed during the final step in the assembly of 30S ribosomal subunit, possibly for assembly of the head region. Essential for efficient processing of 16S rRNA. May be needed both before and after RbfA during the maturation of 16S rRNA. It has affinity for free ribosomal 30S subunits but not for 70S ribosomes. The protein is Ribosome maturation factor RimM of Ehrlichia chaffeensis (strain ATCC CRL-10679 / Arkansas).